The sequence spans 533 residues: Probable bifunctional tRNA threonylcarbamoyladenosine biosynthesis protein (533 aa).

Residues 1-329 (MTRVLGIEGT…FRPDEVPVSW (329 aa)) are kae1. The Fe cation site is built by H113 and H117. Residues 134-138 (NASGA), D166, G179, E183, and N262 contribute to the L-threonylcarbamoyladenylate site. D290 is a Fe cation binding site. Residues 338–533 (PVPTDERRQG…REIETRGRYQ (196 aa)) enclose the Protein kinase domain. Residues 345–352 (RQGAEAVV) and K363 contribute to the ATP site. Residue D452 is the Proton acceptor; for kinase activity of the active site.

It in the N-terminal section; belongs to the KAE1 / TsaD family. The protein in the C-terminal section; belongs to the protein kinase superfamily. Tyr protein kinase family. BUD32 subfamily. In terms of assembly, component of the KEOPS complex that consists of Kae1, Bud32, Cgi121 and Pcc1; the whole complex dimerizes. The cofactor is Fe(2+).

The protein resides in the cytoplasm. It carries out the reaction L-seryl-[protein] + ATP = O-phospho-L-seryl-[protein] + ADP + H(+). It catalyses the reaction L-threonyl-[protein] + ATP = O-phospho-L-threonyl-[protein] + ADP + H(+). The catalysed reaction is L-threonylcarbamoyladenylate + adenosine(37) in tRNA = N(6)-L-threonylcarbamoyladenosine(37) in tRNA + AMP + H(+). In terms of biological role, required for the formation of a threonylcarbamoyl group on adenosine at position 37 (t(6)A37) in tRNAs that read codons beginning with adenine. Is a component of the KEOPS complex that is probably involved in the transfer of the threonylcarbamoyl moiety of threonylcarbamoyl-AMP (TC-AMP) to the N6 group of A37. The Kae1 domain likely plays a direct catalytic role in this reaction. The Bud32 domain probably displays kinase activity that regulates Kae1 function. The protein is Probable bifunctional tRNA threonylcarbamoyladenosine biosynthesis protein of Natronomonas pharaonis (strain ATCC 35678 / DSM 2160 / CIP 103997 / JCM 8858 / NBRC 14720 / NCIMB 2260 / Gabara) (Halobacterium pharaonis).